Consider the following 90-residue polypeptide: DNA-binding protein HTa (90 aa).

This sequence belongs to the bacterial histone-like protein family. As to quaternary structure, homotetramer.

Its function is as follows. Histone-like DNA-binding protein which is capable of wrapping DNA to stabilize it, and thus to prevent its denaturation under extreme environmental conditions. In Thermoplasma acidophilum (strain ATCC 25905 / DSM 1728 / JCM 9062 / NBRC 15155 / AMRC-C165), this protein is DNA-binding protein HTa.